The primary structure comprises 253 residues: Putative cysteine-rich repeat secretory protein 33 (253 aa).

An N-terminal signal peptide occupies residues 1-28 (MFSSYSLCKCLVSFHILAIQVLISCASS). Gnk2-homologous domains lie at 34-133 (EYLN…MIND) and 141-250 (YDNI…LYPF).

The protein belongs to the cysteine-rich repeat secretory protein family.

It is found in the secreted. In Arabidopsis thaliana (Mouse-ear cress), this protein is Putative cysteine-rich repeat secretory protein 33 (CRRSP33).